The following is a 644-amino-acid chain: Subversion of eukaryotic traffic protein A (644 aa).

Residues 1–400 (MYKIYSYLGW…FHTLLSQVSD (400 aa)) are glucosyltransferase. Residues 401–644 (PVNPTAHELK…EYDNNHGLRI (244 aa)) form a ptdIns(3)P-binding and localization domain region.

Ubiquitinated and polyubiquitinated when ectopically produced in both yeast and mammalian cells; however it is unsure if this modification occurs during the L.pneumophila infection of host cells.

It localises to the secreted. Secreted effector that interferes with vesicular trafficking of host cells. Possesses glucohydrolase and mono-O-glucosyltransferase activity by using UDP-glucose as a sugar donor substrate. Is able to glucosylate histones H4 and H3.1 in vitro, but it is unlikely that histones are the natural substrates for SetA. May glycosylate a component of the host cell vesicle trafficking machinery during L.pneumophila infection. Binds with high specificity to phosphatidylinositol 3-phosphate (PtdIns(3)P), (with a dissociation constant value of 809 nM), which guides SetA to the cytosolic leaflet of the early phagosome of the host cell. This is Subversion of eukaryotic traffic protein A (setA) from Legionella pneumophila subsp. pneumophila (strain Philadelphia 1 / ATCC 33152 / DSM 7513).